The following is a 314-amino-acid chain: MSYAADVKKELTGLRVHDGNAKAELSALMRMNGVSTLGIDQTVSVKTENAAIARRIYTLLKQNYTQIEVEVTVAEHNYMSQHKSYGVLLKNKVSDVLTDLGVDPFGLHPDIPDRILNQVDKRRSFLRGAFLAAGSVNSPEKANYHLEIFTTHEELAETLRLMMAEFGLPAKIIDRSGGYVIYIKRAEKIVDFLSTIGATQTMLRFEDIRMMRDMRNSVNRMTNAELANIQKTADAANKQVQQILFIANEIGDLDLLPKKLRDIAKARLEHPDDSLAELGDRLEISKSGANHRMRKLKALEDMINAGVTYDLNKL.

A DNA-binding region (H-T-H motif) is located at residues 274-305 (SLAELGDRLEISKSGANHRMRKLKALEDMINA).

Belongs to the WhiA family.

In terms of biological role, involved in cell division and chromosome segregation. This is Probable cell division protein WhiA from Leuconostoc citreum (strain KM20).